The chain runs to 438 residues: Coenzyme A disulfide reductase (438 aa).

An FAD-binding site is contributed by 8–33 (GAVAGGATCASQIRRLDKESDIIIFE). Residues Thr-15, Gln-19, Arg-22, Ser-39, and Asn-42 each contribute to the substrate site. The active-site Nucleophile is the Cys-43. The active-site Redox-active is the Cys-43. Substrate is bound at residue Lys-71. Residue 151–166 (VLVVGAGYVSLEVLEN) coordinates NADP(+). 267–277 (TNVPNIYAIGD) contacts FAD. His-299 contacts substrate. Tyr-419 is an FAD binding site. Lys-427 is a substrate binding site.

Belongs to the class-III pyridine nucleotide-disulfide oxidoreductase family. As to quaternary structure, homodimer. It depends on FAD as a cofactor.

It catalyses the reaction NADP(+) + 2 CoA = CoA-disulfide + NADPH + H(+). Catalyzes specifically the NADPH-dependent reduction of coenzyme A disulfide. The sequence is that of Coenzyme A disulfide reductase from Staphylococcus aureus (strain MSSA476).